The following is a 340-amino-acid chain: Fructose import permease protein FruG (340 aa).

9 helical membrane passes run 23–43 (IPTLAAVVIFILMIIMGQALF), 49–69 (LGFISSLFIDHAYLIILAVAM), 73–93 (ILTGGIDLSVGAIVAITAVVG), 101–121 (VPAFLVMIIMLLIGAVFGLLA), 130–150 (MQPFIATLSTMFLARGLASII), 182–202 (LSFNVGVIIALVVVVFGYVFL), 234–254 (IIYLTSATLAALASIVYTANI), 273–293 (VVIGGTIITGGFGYVLGSVLG), and 307–327 (FGVPAEWTTIVIGLMILVFVV).

The protein belongs to the binding-protein-dependent transport system permease family. The complex is composed of an ATP-binding protein (FruK), two transmembrane proteins (FruF and FruG) and a solute-binding protein (FruE).

Its subcellular location is the cell membrane. In terms of biological role, part of the high-affinity ABC transporter complex FruEKFG involved in fructose uptake. Can also transport ribose and xylose, with lower affinity. Probably responsible for the translocation of the substrate across the membrane. The sequence is that of Fructose import permease protein FruG from Bifidobacterium longum (strain NCC 2705).